The sequence spans 411 residues: Putative nickel insertion protein (411 aa).

The protein belongs to the LarC family.

The sequence is that of Putative nickel insertion protein from Acaryochloris marina (strain MBIC 11017).